The sequence spans 30 residues: Nattererin-2 (30 aa).

In terms of tissue distribution, expressed by the skin glands.

It is found in the secreted. In terms of biological role, probably has antibacterial activity. In Physalaemus nattereri (Cuyaba dwarf frog), this protein is Nattererin-2.